A 241-amino-acid chain; its full sequence is RxLR effector protein SFI5 (241 aa).

An N-terminal signal peptide occupies residues 1-20; the sequence is MLRQARPLVVLIAVTFLVAS. The short motif at 44–62 is the RxLR-dEER element; sequence RLLRTHHATIKVNADSEER.

Belongs to the RxLR effector family.

It is found in the secreted. The protein localises to the host cell membrane. Effector that suppresses flg22-induced post-translational MAP kinase activation in tomato but not in Arabidopsis. The perception of highly conserved pathogen- or microbe-associated molecular patterns (PAMPs/MAMPs), such as flg22, triggers converging signaling pathways recruiting MAP kinase cascades and inducing transcriptional re-programming, yielding a generic antimicrobial response. This chain is RxLR effector protein SFI5, found in Phytophthora infestans (strain T30-4) (Potato late blight agent).